The primary structure comprises 300 residues: GTP-binding protein At2g22870 (300 aa).

The 179-residue stretch at Asp119 to Tyr297 folds into the EngB-type G domain. Residues Gly127–Ser134, Gly154–Leu158, Asp172–Gly175, Thr239–Asp242, and Thr276–Ser278 contribute to the GTP site. Positions 134 and 156 each coordinate Mg(2+).

The protein belongs to the TRAFAC class TrmE-Era-EngA-EngB-Septin-like GTPase superfamily. EngB GTPase family. Mg(2+) serves as cofactor.

The chain is GTP-binding protein At2g22870 (EMB2001) from Arabidopsis thaliana (Mouse-ear cress).